The following is a 459-amino-acid chain: MLNMSSDQEPPCSPTGTASSMSHVSDSDSDSPLSPAGSEGRGSHRPPGISKRDGEEPMDERFPACIRDAVSQVLKGYDWSLVPMPVRGSGGLKAKPHVKRPMNAFMVWAQAARRKLADQYPHLHNAELSKTLGKLWRLLSENEKRPFVEEAERLRVQHKKDHPDYKYQPRRRKSVKAGQSDSDSGAELGHHPGSQMYKSDSGMGSMGENHLHSEHAGQNHGPPTPPTTPKTDLHHGGKQELKHEGRRMMDNGRQNIDFSNVDINELSSEVISNIEAFDVHEFDQYLPLNGHGAIPADHGQNTTAAPYGPSYPHAAGATPAPVWSHKSSSTSSSSSIESGQQRPHIKTEQLSPSHYNDQSQGSPTHSDYNTYSAQACATTVSSATVPTAFPSSQCDYTDLPSSNYYNPYSGYPSSLYQYPYFHSSRRPYATPILNSLSIPPSHSPTSNWDQPVYTTLTRP.

Over residues 1 to 18 (MLNMSSDQEPPCSPTGTA) the composition is skewed to polar residues. Disordered stretches follow at residues 1–57 (MLNM…GEEP), 152–247 (ERLR…EGRR), and 293–367 (AIPA…THSD). Residues 19–34 (SSMSHVSDSDSDSPLS) are compositionally biased toward low complexity. Residues 56–96 (EPMDERFPACIRDAVSQVLKGYDWSLVPMPVRGSGGLKAKP) are dimerization (DIM). The segment at residues 98 to 166 (VKRPMNAFMV…QHKKDHPDYK (69 aa)) is a DNA-binding region (HMG box). Basic and acidic residues-rich tracts occupy residues 152–167 (ERLR…DYKY) and 231–247 (TDLH…EGRR). The tract at residues 222-297 (PPTPPTTPKT…LNGHGAIPAD (76 aa)) is transactivation domain (TAM). Over residues 324–338 (SHKSSSTSSSSSIES) the composition is skewed to low complexity. A transactivation domain (TAC) region spans residues 342–459 (RPHIKTEQLS…QPVYTTLTRP (118 aa)). A compositionally biased stretch (polar residues) spans 348–367 (EQLSPSHYNDQSQGSPTHSD). Residues 413 to 421 (SSLYQYPYF) carry the 9aaTAD motif. The interval 439-459 (PPSHSPTSNWDQPVYTTLTRP) is disordered.

As to expression, from gastrula to neural stages, expressed in a ventrolateral domain around the blastopore. A second domain of expression appears at mid-gastrula stage (stage 11.5) lateral to the neural plate, in the presumptive neural crest. At neurula stage (stage 15), also expressed in the prospective cement gland. As development proceeds, expression persists in migrating cranial crest cells as they populate the pharyngeal arches, and in trunk neural crest cells. Not expressed early in the otic placode, with otic expression only beginning around stage 30.

The protein localises to the nucleus. Transcription factor. Acts early in neural crest formation, functioning redundantly with the other group E Sox factors sox9 and sox10 to induce neural crest progenitors. Regulates the onset of expression of many neural crest marker genes including sox10, and regulates the development of multiple neural crest derivatives. May be required to regulate neural crest cell migration. The polypeptide is Transcription factor Sox-8 (sox8) (Xenopus laevis (African clawed frog)).